Here is a 423-residue protein sequence, read N- to C-terminus: AP-1 complex subunit mu-1 (423 aa).

Residue serine 2 is modified to N-acetylserine. 3 positions are modified to phosphothreonine: threonine 152, threonine 154, and threonine 223. Residues lysine 168–arginine 421 enclose the MHD domain.

It belongs to the adaptor complexes medium subunit family. In terms of assembly, adaptor protein complex 1 (AP-1) is a heterotetramer composed of two large adaptins (gamma-type subunit AP1G1 and beta-type subunit AP1B1), a medium adaptin (mu-type subunit AP1M1 or AP1M2) and a small adaptin (sigma-type subunit AP1S1 or AP1S2 or AP1S3). Interacts with MARCHF11. In terms of processing, phosphorylation of membrane-bound AP1M1/AP1M2 increases its affinity for sorting signals.

The protein resides in the golgi apparatus. It localises to the cytoplasmic vesicle. The protein localises to the clathrin-coated vesicle membrane. Functionally, subunit of clathrin-associated adaptor protein complex 1 that plays a role in protein sorting in the trans-Golgi network (TGN) and endosomes. The AP complexes mediate the recruitment of clathrin to membranes and the recognition of sorting signals within the cytosolic tails of transmembrane cargo molecules. In Mus musculus (Mouse), this protein is AP-1 complex subunit mu-1 (Ap1m1).